The following is a 1249-amino-acid chain: DNA-directed RNA polymerase subunit beta (1249 aa).

It belongs to the RNA polymerase beta chain family. In terms of assembly, the RNAP catalytic core consists of 2 alpha, 1 beta, 1 beta' and 1 omega subunit. When a sigma factor is associated with the core the holoenzyme is formed, which can initiate transcription.

It carries out the reaction RNA(n) + a ribonucleoside 5'-triphosphate = RNA(n+1) + diphosphate. In terms of biological role, DNA-dependent RNA polymerase catalyzes the transcription of DNA into RNA using the four ribonucleoside triphosphates as substrates. This Clostridium botulinum (strain Eklund 17B / Type B) protein is DNA-directed RNA polymerase subunit beta.